Consider the following 197-residue polypeptide: 3-isopropylmalate dehydratase small subunit (197 aa).

It belongs to the LeuD family. LeuD type 1 subfamily. As to quaternary structure, heterodimer of LeuC and LeuD.

The enzyme catalyses (2R,3S)-3-isopropylmalate = (2S)-2-isopropylmalate. It participates in amino-acid biosynthesis; L-leucine biosynthesis; L-leucine from 3-methyl-2-oxobutanoate: step 2/4. Functionally, catalyzes the isomerization between 2-isopropylmalate and 3-isopropylmalate, via the formation of 2-isopropylmaleate. In Acidothermus cellulolyticus (strain ATCC 43068 / DSM 8971 / 11B), this protein is 3-isopropylmalate dehydratase small subunit.